The sequence spans 231 residues: Ribonuclease HII (231 aa).

The RNase H type-2 domain occupies 38 to 227; sequence ELVAGGDEAG…IKSFYGQLKL (190 aa). Residues aspartate 44, glutamate 45, and aspartate 136 each contribute to the a divalent metal cation site.

Belongs to the RNase HII family. Mn(2+) is required as a cofactor. The cofactor is Mg(2+).

Its subcellular location is the cytoplasm. It catalyses the reaction Endonucleolytic cleavage to 5'-phosphomonoester.. Its function is as follows. Endonuclease that specifically degrades the RNA of RNA-DNA hybrids. The protein is Ribonuclease HII of Carboxydothermus hydrogenoformans (strain ATCC BAA-161 / DSM 6008 / Z-2901).